The sequence spans 358 residues: Aromatic amino acid aminotransferase (358 aa).

K214 is modified (N6-(pyridoxal phosphate)lysine).

The protein belongs to the class-II pyridoxal-phosphate-dependent aminotransferase family. Homodimer. Requires pyridoxal 5'-phosphate as cofactor.

It carries out the reaction an aromatic L-alpha-amino acid + 2-oxoglutarate = an aromatic oxo-acid + L-glutamate. Functionally, aminotransferase that catalyzes the conversion of aromatic amino acids and 2-oxoglutarate into corresponding aromatic oxo acids and L-glutamate. The sequence is that of Aromatic amino acid aminotransferase from Rhodococcus erythropolis (strain PR4 / NBRC 100887).